The primary structure comprises 93 residues: Hematopoietic cell signal transducer (93 aa).

Positions Met1 to Ala18 are cleaved as a signal peptide. The Extracellular portion of the chain corresponds to Gln19–Pro48. The helical transmembrane segment at Leu49–Phe69 threads the bilayer. Topologically, residues Leu70–Gly93 are cytoplasmic. Position 86 is a phosphotyrosine (Tyr86). The GRB2 binding site stretch occupies residues Tyr86–Asn88. A PIK3R1 binding site region spans residues Tyr86–Met89.

Belongs to the DAP10 family. Interacts with CLEC5A. Forms an CLEC5A/TYROBP/HCST trimolecular complex depending almost solely on TYROBP. Homodimer; Disulfide-linked. Heterohexamer composed of four subunits of HCST/DAP10 and two subunits of KLRK1. Interacts (via transmembrane domain) with KLRK1 (via transmembrane domain); the interaction is required for KLRK1 NK cell surface and induces NK cell-mediated cytotoxicity. Interacts with PIK3R1 and GRB2. Interacts with CD300H. In terms of processing, phosphorylated; PIK3R1 and GRB2 associate specifically with tyrosine-phosphorylated HCST. Post-translationally, O-glycosylated. In terms of tissue distribution, predominantly expressed in hemopoietic cells such as NK cells, subset of T-cells and monocytes. Detected in leukocytes, spleen, and thymus.

The protein resides in the membrane. Transmembrane adapter protein which associates with KLRK1 to form an activation receptor KLRK1-HCST in lymphoid and myeloid cells; this receptor plays a major role in triggering cytotoxicity against target cells expressing cell surface ligands such as MHC class I chain-related MICA and MICB, and UL16-binding proteins (ULBPs); these ligands are up-regulated by stress conditions and pathological state such as viral infection and tumor transformation. Functions as a docking site for PI3-kinase PIK3R1 and GRB2. Interaction of ULBPs with KLRK1-HCST triggers calcium mobilization and activation of the PIK3R1, MAP2K/ERK, and JAK2/STAT5 signaling pathways. Both PIK3R1 and GRB2 are required for full KLRK1-HCST-mediated activation and ultimate killing of target cells. In NK cells, KLRK1-HCST signaling directly induces cytotoxicity and enhances cytokine production initiated via DAP12/TYROBP-associated receptors. In T-cells, it provides primarily costimulation for TCR-induced signals. KLRK1-HCST receptor plays a role in immune surveillance against tumors and is required for cytolysis of tumors cells; indeed, melanoma cells that do not express KLRK1 ligands escape from immune surveillance mediated by NK cells. The polypeptide is Hematopoietic cell signal transducer (HCST) (Homo sapiens (Human)).